The sequence spans 827 residues: Spastin (827 aa).

A compositionally biased stretch (polar residues) spans 1–13 (MVRNKYTLTTAGK). A disordered region spans residues 1–58 (MVRNKYTLTTAGKSPSKKSRTGSLSKQHDATGDDDGETGTLDGSGSAAGSPVGGGTDA). The Cytoplasmic segment spans residues 1 to 79 (MVRNKYTLTT…KQNLYIISFP (79 aa)). The segment covering 38–50 (TGTLDGSGSAAGS) has biased composition (low complexity). Positions 80-100 (VIFVFNVLRSLLYQLFIVFRY) form an intramembrane region, helical. Topologically, residues 101-827 (VYNFTTKVVY…WLQDFGDVTL (727 aa)) are cytoplasmic. Disordered regions lie at residues 127–190 (QHGH…AHPL) and 207–229 (SIQR…KQKH). Over residues 129 to 141 (GHHHHHHHRHSSH) the composition is skewed to basic residues. Residues 142–190 (SIHSTAAAHQLQQHQQQQQHQYSLLQQEQHGVTEPQQQQQQQHQAAHPL) show a composition bias toward low complexity. The region spanning 231–306 (HRRAFEYISK…SMARDRLQFL (76 aa)) is the MIT domain. 3 disordered regions span residues 358-381 (HHPA…ATPS), 398-433 (VGYK…GGAG), and 476-526 (VSIP…PQIS). Over residues 364–381 (TAASSRPTTAATAPATPS) the composition is skewed to low complexity. 2 stretches are compositionally biased toward low complexity: residues 476–486 (VSIPIPGSSPV) and 510–524 (QQPQ…QQPQ). 592–599 (GPPGNGKT) contacts ATP.

Belongs to the AAA ATPase family. Spastin subfamily. As to quaternary structure, homohexamer. The homohexamer is stabilized by ATP-binding. The homohexamer may adopt a ring conformation through which microtubules pass prior to being severed. Interacts with microtubules.

Its subcellular location is the membrane. The protein localises to the cytoplasm. It localises to the cytoskeleton. It is found in the microtubule organizing center. The protein resides in the centrosome. The catalysed reaction is n ATP + n H2O + a microtubule = n ADP + n phosphate + (n+1) alpha/beta tubulin heterodimers.. In terms of biological role, ATP-dependent microtubule severing protein. Microtubule severing may promote reorganization of cellular microtubule arrays and the release of microtubules from the microtubule organizing center following nucleation. The sequence is that of Spastin (spas) from Anopheles gambiae (African malaria mosquito).